Here is a 240-residue protein sequence, read N- to C-terminus: Glutathione S-transferase U9 (240 aa).

Residues 7–86 (NKVILHGSFA…YIDETWSNGP (80 aa)) enclose the GST N-terminal domain. Glutathione-binding positions include 17 to 18 (SP), 43 to 44 (NK), 57 to 58 (KI), and 70 to 71 (ES). The region spanning 92–226 (DPYRRSKVRF…EQILEILRAF (135 aa)) is the GST C-terminal domain. The residue at position 161 (threonine 161) is a Phosphothreonine.

The protein belongs to the GST superfamily. Tau family.

It is found in the cytoplasm. Its subcellular location is the cytosol. It catalyses the reaction RX + glutathione = an S-substituted glutathione + a halide anion + H(+). In terms of biological role, may be involved in the conjugation of reduced glutathione to a wide number of exogenous and endogenous hydrophobic electrophiles and have a detoxification role against certain herbicides. This Arabidopsis thaliana (Mouse-ear cress) protein is Glutathione S-transferase U9 (GSTU9).